A 192-amino-acid chain; its full sequence is MGEAVKDGREEVIQAWYMDDSEEDQRLPHHKDPKEFVSLDKLAELGVLSWRLDADNYETDEDLKKIRESRGYSYMDFCEVCPEKLPNYEVKVKSFFEEHLHTDEEIRYCVAGTGYFDVRDRNEAWIRVLVKKGGMIVLPAGIYHRFTVDSDNYIKAMRLFVGEPVWTPYNRPHDHLPARKEYVDNFMINASA.

Residues His99, His101, Glu105, and His144 each contribute to the Fe(2+) site. Ni(2+) is bound by residues His99, His101, Glu105, and His144.

This sequence belongs to the acireductone dioxygenase (ARD) family. The cofactor is Fe(2+). Requires Ni(2+) as cofactor.

The protein localises to the cytoplasm. It localises to the nucleus. The enzyme catalyses 1,2-dihydroxy-5-(methylsulfanyl)pent-1-en-3-one + O2 = 4-methylsulfanyl-2-oxobutanoate + formate + 2 H(+). The catalysed reaction is 1,2-dihydroxy-5-(methylsulfanyl)pent-1-en-3-one + O2 = 3-(methylsulfanyl)propanoate + CO + formate + 2 H(+). Its pathway is amino-acid biosynthesis; L-methionine biosynthesis via salvage pathway; L-methionine from S-methyl-5-thio-alpha-D-ribose 1-phosphate: step 5/6. Its function is as follows. Catalyzes 2 different reactions between oxygen and the acireductone 1,2-dihydroxy-3-keto-5-methylthiopentene (DHK-MTPene) depending upon the metal bound in the active site. Fe-containing acireductone dioxygenase (Fe-ARD) produces formate and 2-keto-4-methylthiobutyrate (KMTB), the alpha-ketoacid precursor of methionine in the methionine recycle pathway. Ni-containing acireductone dioxygenase (Ni-ARD) produces methylthiopropionate, carbon monoxide and formate, and does not lie on the methionine recycle pathway. This Arabidopsis thaliana (Mouse-ear cress) protein is Acireductone dioxygenase 2 (ARD2).